A 350-amino-acid polypeptide reads, in one-letter code: Arabinogalactan endo-beta-1,4-galactanase A (350 aa).

An N-terminal signal peptide occupies residues 1–16 (MIYPLLLSALPLLSSA). An N-linked (GlcNAc...) asparagine glycan is attached at Asn128. Glu152 acts as the Proton donor in catalysis. Residue Glu262 is the Nucleophile of the active site.

Belongs to the glycosyl hydrolase 53 family.

It is found in the secreted. The catalysed reaction is The enzyme specifically hydrolyzes (1-&gt;4)-beta-D-galactosidic linkages in type I arabinogalactans.. Its function is as follows. Endogalactanase involved in the degradation of plant cell wall polysaccharides, and more particularly of hairy regions of pectin. The polypeptide is Arabinogalactan endo-beta-1,4-galactanase A (galA) (Aspergillus niger).